The chain runs to 268 residues: 3-methyl-2-oxobutanoate hydroxymethyltransferase (268 aa).

Residues Asp-46 and Asp-85 each contribute to the Mg(2+) site. 3-methyl-2-oxobutanoate contacts are provided by residues 46-47 (DS), Asp-85, and Lys-115. Glu-117 lines the Mg(2+) pocket. Glu-184 (proton acceptor) is an active-site residue.

The protein belongs to the PanB family. Homodecamer; pentamer of dimers. The cofactor is Mg(2+).

The protein resides in the cytoplasm. The catalysed reaction is 3-methyl-2-oxobutanoate + (6R)-5,10-methylene-5,6,7,8-tetrahydrofolate + H2O = 2-dehydropantoate + (6S)-5,6,7,8-tetrahydrofolate. Its pathway is cofactor biosynthesis; (R)-pantothenate biosynthesis; (R)-pantoate from 3-methyl-2-oxobutanoate: step 1/2. In terms of biological role, catalyzes the reversible reaction in which hydroxymethyl group from 5,10-methylenetetrahydrofolate is transferred onto alpha-ketoisovalerate to form ketopantoate. The polypeptide is 3-methyl-2-oxobutanoate hydroxymethyltransferase (Magnetococcus marinus (strain ATCC BAA-1437 / JCM 17883 / MC-1)).